The sequence spans 182 residues: Isopentenyl-diphosphate Delta-isomerase (182 aa).

His-25 and His-32 together coordinate Mn(2+). Residues 30 to 164 (LLHLAFSSWL…PWAFSPWMVM (135 aa)) enclose the Nudix hydrolase domain. Cys-67 is a catalytic residue. Mn(2+) is bound at residue His-69. Glu-87 provides a ligand contact to Mg(2+). Mn(2+) is bound by residues Glu-114 and Glu-116. The active site involves Glu-116.

Belongs to the IPP isomerase type 1 family. Homodimer. Mg(2+) is required as a cofactor. It depends on Mn(2+) as a cofactor.

Its subcellular location is the cytoplasm. It catalyses the reaction isopentenyl diphosphate = dimethylallyl diphosphate. It participates in isoprenoid biosynthesis; dimethylallyl diphosphate biosynthesis; dimethylallyl diphosphate from isopentenyl diphosphate: step 1/1. Functionally, catalyzes the 1,3-allylic rearrangement of the homoallylic substrate isopentenyl (IPP) to its highly electrophilic allylic isomer, dimethylallyl diphosphate (DMAPP). This is Isopentenyl-diphosphate Delta-isomerase from Escherichia coli (strain ATCC 8739 / DSM 1576 / NBRC 3972 / NCIMB 8545 / WDCM 00012 / Crooks).